A 264-amino-acid polypeptide reads, in one-letter code: Small ribosomal subunit protein eS1 (264 aa).

K34 is modified (N6-acetyllysine; alternate). K34 is covalently cross-linked (Glycyl lysine isopeptide (Lys-Gly) (interchain with G-Cter in SUMO2); alternate). K56 carries the N6-acetyllysine modification. Y155 is subject to ADP-ribosyltyrosine. Positions 232 to 264 (HGEGSSSGKATGDETGAKVERADGYEPPVQESV) are disordered. Residues S236 and S237 each carry the phosphoserine modification. Residues 242-255 (TGDETGAKVERADG) show a composition bias toward basic and acidic residues. K249 is subject to N6-acetyllysine; alternate. K249 participates in a covalent cross-link: Glycyl lysine isopeptide (Lys-Gly) (interchain with G-Cter in SUMO2); alternate. A Phosphotyrosine modification is found at Y256. S263 carries the phosphoserine modification.

Belongs to the eukaryotic ribosomal protein eS1 family. As to quaternary structure, component of the small ribosomal subunit. Mature ribosomes consist of a small (40S) and a large (60S) subunit. The 40S subunit contains about 33 different proteins and 1 molecule of RNA (18S). The 60S subunit contains about 49 different proteins and 3 molecules of RNA (28S, 5.8S and 5S). Identified in a IGF2BP1-dependent mRNP granule complex containing untranslated mRNAs. Binds with high affinity to IPO4. Interacts with DDIT3. Part of the small subunit (SSU) processome, composed of more than 70 proteins and the RNA chaperone small nucleolar RNA (snoRNA) U3. ADP-ribosylated at Tyr-155 by PARP1 in presence of HPF1.

It is found in the cytoplasm. The protein resides in the nucleus. It localises to the nucleolus. Its function is as follows. Component of the small ribosomal subunit. The ribosome is a large ribonucleoprotein complex responsible for the synthesis of proteins in the cell. Part of the small subunit (SSU) processome, first precursor of the small eukaryotic ribosomal subunit. During the assembly of the SSU processome in the nucleolus, many ribosome biogenesis factors, an RNA chaperone and ribosomal proteins associate with the nascent pre-rRNA and work in concert to generate RNA folding, modifications, rearrangements and cleavage as well as targeted degradation of pre-ribosomal RNA by the RNA exosome. May play a role during erythropoiesis through regulation of transcription factor DDIT3. The protein is Small ribosomal subunit protein eS1 of Bos taurus (Bovine).